Consider the following 131-residue polypeptide: Single-stranded DNA-binding protein 2 (131 aa).

Positions 1 to 103 (MYNKVIMIGR…VLASSFQLLE (103 aa)) constitute an SSB domain. An Important for interaction with partner proteins motif is present at residues 126 to 131 (EEELPF).

As to quaternary structure, homotetramer.

Functionally, plays an important role in DNA replication, recombination and repair. Binds to ssDNA and to an array of partner proteins to recruit them to their sites of action during DNA metabolism. The polypeptide is Single-stranded DNA-binding protein 2 (ssb2) (Streptococcus agalactiae serotype V (strain ATCC BAA-611 / 2603 V/R)).